A 263-amino-acid polypeptide reads, in one-letter code: Adaptin ear-binding coat-associated protein 2 (263 aa).

Disordered regions lie at residues 167 to 191 and 209 to 263; these read KKEG…LPPP and GGSL…WVQF. Serine 181 bears the Phosphoserine mark. 2 consecutive short sequence motifs (WXXF motif) follow at residues 218 to 221 and 238 to 241; these read GSGG and DIWG. The span at 246 to 263 shows a compositional bias: low complexity; that stretch reads STGSPSSQSQPGTGWVQF.

This sequence belongs to the NECAP family. As to quaternary structure, interacts with AP1G1 and AP2A1 components of the adapter protein complexes AP-1 and AP-2. Interacts with the GAE domain proteins GGA1, GGA2 and GGA3. As to expression, expressed in brain, heart, kidney, liver and lung (at protein level).

The protein resides in the cytoplasmic vesicle. It localises to the clathrin-coated vesicle membrane. The protein localises to the cell membrane. Involved in endocytosis. This chain is Adaptin ear-binding coat-associated protein 2 (Necap2), found in Rattus norvegicus (Rat).